A 1089-amino-acid chain; its full sequence is PALM2-AKAP2 fusion protein (1089 aa).

Residues 70–107 (SEEDEFKVKQLEDNIQRLEQEIQALESEESQISAKEQI) are a coiled coil. Disordered stretches follow at residues 165 to 194 (SEDANQLRSKQDNCGDSRLEPAASSLSPDH), 210 to 231 (PGVTSTPHSKDHSSPFYSPSHN), and 289 to 362 (PAHS…SRDG). Residues 173–183 (SKQDNCGDSRL) are compositionally biased toward basic and acidic residues. Residues Arg315 and Ser318 each carry the phosphoserine modification. The span at 317–328 (PSDRMAEGERAN) shows a compositional bias: basic and acidic residues. The segment covering 329-347 (GHSTDQPQDLLGNSLQAPA) has biased composition (polar residues). The residue at position 348 (Ser348) is a Phosphoserine. Positions 348–357 (SPSSSTSSHC) are enriched in low complexity. Lys370 is covalently cross-linked (Glycyl lysine isopeptide (Lys-Gly) (interchain with G-Cter in SUMO1); alternate). Lys370 participates in a covalent cross-link: Glycyl lysine isopeptide (Lys-Gly) (interchain with G-Cter in SUMO2); alternate. The interval 429-517 (KNPGIAAKWW…LSTSQPCTAP (89 aa)) is disordered. Over residues 455-470 (LESHRKYKERKEKRAQ) the composition is skewed to basic and acidic residues. The span at 471 to 508 (QEQLQLQQQQQQQLQQQQLQQQQLQQQQLQQQLQQQQL) shows a compositional bias: low complexity. Ser553 carries the post-translational modification Phosphoserine. Residues 592-644 (TVGGTLEDGGTQAAKEQKAPCVSESQSAGAGPANAATQGKEGPYSEPSKRGPL) are disordered. 3 positions are modified to phosphoserine: Ser678, Ser682, and Ser734. Polar residues predominate over residues 712 to 749 (FSMDNISDSGASNETPSALQENSLADFSLPQTPQTDNP). 3 disordered regions span residues 712–783 (FSMD…DPLE), 800–899 (EQVD…YFSK), and 915–934 (TQESDVMVGPFKLRSRKQRT). A Phosphothreonine modification is found at Thr743. Residues 782–795 (LEYQAGLLVQNAIQ) are PKA-RII subunit binding domain. The span at 801–814 (QVDKAEAHTSKEGS) shows a compositional bias: basic and acidic residues. Position 847 is a phosphoserine (Ser847). Residues 850-871 (QEKRDILPKNLPAEDRALREKG) show a composition bias toward basic and acidic residues. Positions 928–958 (RSRKQRTLSMIEEEIRAAQEREEELKRQRQV) form a coiled coil. Phosphoserine is present on residues Ser936, Ser964, Ser995, and Ser1002. The disordered stretch occupies residues 946–1021 (QEREEELKRQ…AAGTQRPKNL (76 aa)).

Highly expressed in lung and weakly in thymus and cerebellum. Little or no expression in liver, heart and cerebral cortex. All isoforms are expressed in lung, but KL2A and KL2B isoforms are the principal isoforms in cerebellum.

It is found in the apical cell membrane. In terms of biological role, binds to regulatory subunit (RII) of protein kinase A. May be involved in establishing polarity in signaling systems or in integrating PKA-RII isoforms with downstream effectors to capture, amplify and focus diffuse, trans-cellular signals carried by cAMP. Binds tp and modulates the structure of the actin cytoskeleton. This is PALM2-AKAP2 fusion protein from Mus musculus (Mouse).